Consider the following 353-residue polypeptide: Suppressor of RNA-mediated gene silencing (353 aa).

Belongs to the phytoreovirus non-structural protein 10 family.

Its function is as follows. Suppressor of RNA-mediated gene silencing, also known as post-transcriptional gene silencing (PTGS), a mechanism of plant viral defense that limits the accumulation of viral RNAs. The chain is Suppressor of RNA-mediated gene silencing from Alopecurus aequalis (Barnyard grass).